The chain runs to 170 residues: Phosphopantetheine adenylyltransferase (170 aa).

Thr10 contacts substrate. ATP contacts are provided by residues 10–11 and His18; that span reads TF. Residues Lys42, Val79, and Arg93 each contribute to the substrate site. ATP-binding positions include 94–96, Glu104, and 129–135; these read GLR and TQFISST.

Belongs to the bacterial CoaD family. In terms of assembly, homohexamer. Mg(2+) is required as a cofactor.

It is found in the cytoplasm. It carries out the reaction (R)-4'-phosphopantetheine + ATP + H(+) = 3'-dephospho-CoA + diphosphate. It participates in cofactor biosynthesis; coenzyme A biosynthesis; CoA from (R)-pantothenate: step 4/5. Functionally, reversibly transfers an adenylyl group from ATP to 4'-phosphopantetheine, yielding dephospho-CoA (dPCoA) and pyrophosphate. The sequence is that of Phosphopantetheine adenylyltransferase from Parvibaculum lavamentivorans (strain DS-1 / DSM 13023 / NCIMB 13966).